A 304-amino-acid polypeptide reads, in one-letter code: Aspartate carbamoyltransferase catalytic subunit (304 aa).

2 residues coordinate carbamoyl phosphate: R54 and T55. K83 is an L-aspartate binding site. Carbamoyl phosphate-binding residues include R104, H132, and Q135. Positions 165 and 226 each coordinate L-aspartate. The carbamoyl phosphate site is built by L265 and P266.

This sequence belongs to the aspartate/ornithine carbamoyltransferase superfamily. ATCase family. In terms of assembly, heterooligomer of catalytic and regulatory chains.

It catalyses the reaction carbamoyl phosphate + L-aspartate = N-carbamoyl-L-aspartate + phosphate + H(+). The protein operates within pyrimidine metabolism; UMP biosynthesis via de novo pathway; (S)-dihydroorotate from bicarbonate: step 2/3. Functionally, catalyzes the condensation of carbamoyl phosphate and aspartate to form carbamoyl aspartate and inorganic phosphate, the committed step in the de novo pyrimidine nucleotide biosynthesis pathway. This chain is Aspartate carbamoyltransferase catalytic subunit, found in Pyrobaculum islandicum (strain DSM 4184 / JCM 9189 / GEO3).